The following is a 156-amino-acid chain: Small ribosomal subunit protein uS7 (156 aa).

It belongs to the universal ribosomal protein uS7 family. In terms of assembly, part of the 30S ribosomal subunit. Contacts proteins S9 and S11.

Functionally, one of the primary rRNA binding proteins, it binds directly to 16S rRNA where it nucleates assembly of the head domain of the 30S subunit. Is located at the subunit interface close to the decoding center, probably blocks exit of the E-site tRNA. This is Small ribosomal subunit protein uS7 (rspG) from Streptomyces coelicolor (strain ATCC BAA-471 / A3(2) / M145).